The chain runs to 699 residues: Protein phosphatase 1 regulatory subunit 37 (699 aa).

The span at 1 to 12 shows a compositional bias: pro residues; that stretch reads MEIPPQEAPPGP. The segment at 1–42 is disordered; sequence MEIPPQEAPPGPGADGEAEEAPVEAPSPGPASPPADGRLKAA. Phosphoserine is present on residues serine 50 and serine 56. LRR repeat units follow at residues 220–240, 248–269, 277–297, 306–326, and 334–354; these read SLAV…MLLA, TLRE…AQLG, SLQI…AYIC, GLAT…AFLG, and SLET…RNLK. Residues 467–667 are disordered; it reads RLQLSASMPE…PPGPEAKVGS (201 aa). Residues 510–525 show a composition bias toward acidic residues; sequence SDSDSDSEGEDRDEAD. Serine 566 is subject to Phosphoserine. Composition is skewed to pro residues over residues 588–613 and 622–642; these read PPVP…PFPT and DPGP…PPLP.

This sequence belongs to the PPP1R37 family. As to quaternary structure, interacts with PPP1CA.

In terms of biological role, inhibits phosphatase activity of protein phosphatase 1 (PP1) complexes. The sequence is that of Protein phosphatase 1 regulatory subunit 37 (PPP1R37) from Bos taurus (Bovine).